A 128-amino-acid polypeptide reads, in one-letter code: Large ribosomal subunit protein bL12 (128 aa).

Belongs to the bacterial ribosomal protein bL12 family. As to quaternary structure, homodimer. Part of the ribosomal stalk of the 50S ribosomal subunit. Forms a multimeric L10(L12)X complex, where L10 forms an elongated spine to which 2 to 4 L12 dimers bind in a sequential fashion. Binds GTP-bound translation factors.

Forms part of the ribosomal stalk which helps the ribosome interact with GTP-bound translation factors. Is thus essential for accurate translation. The chain is Large ribosomal subunit protein bL12 from Synechococcus sp. (strain CC9311).